The following is an 86-amino-acid chain: Omega-theraphotoxin-Hhn1f 2 (86 aa).

A signal peptide spans 1–21 (MKSIVFVALFGLALLAVVCSA). Residues 22–50 (SEDAHKELLKEVVRAVVVDKTDAVQAEER) constitute a propeptide that is removed on maturation. 3 disulfides stabilise this stretch: cysteine 52–cysteine 66, cysteine 59–cysteine 71, and cysteine 65–cysteine 78.

Belongs to the neurotoxin 10 (Hwtx-1) family. 17 (Hntx-9) subfamily. In terms of tissue distribution, expressed by the venom gland.

Its subcellular location is the secreted. Ion channel inhibitor. In Cyriopagopus hainanus (Chinese bird spider), this protein is Omega-theraphotoxin-Hhn1f 2.